We begin with the raw amino-acid sequence, 425 residues long: Serine--tRNA ligase (425 aa).

230 to 232 contributes to the L-serine binding site; the sequence is TAE. 261–263 is a binding site for ATP; it reads RQE. An L-serine-binding site is contributed by E284. 348–351 contributes to the ATP binding site; that stretch reads EISS. S384 serves as a coordination point for L-serine.

The protein belongs to the class-II aminoacyl-tRNA synthetase family. Type-1 seryl-tRNA synthetase subfamily. As to quaternary structure, homodimer. The tRNA molecule binds across the dimer.

It localises to the cytoplasm. The enzyme catalyses tRNA(Ser) + L-serine + ATP = L-seryl-tRNA(Ser) + AMP + diphosphate + H(+). It carries out the reaction tRNA(Sec) + L-serine + ATP = L-seryl-tRNA(Sec) + AMP + diphosphate + H(+). It participates in aminoacyl-tRNA biosynthesis; selenocysteinyl-tRNA(Sec) biosynthesis; L-seryl-tRNA(Sec) from L-serine and tRNA(Sec): step 1/1. Its function is as follows. Catalyzes the attachment of serine to tRNA(Ser). Is also able to aminoacylate tRNA(Sec) with serine, to form the misacylated tRNA L-seryl-tRNA(Sec), which will be further converted into selenocysteinyl-tRNA(Sec). The polypeptide is Serine--tRNA ligase (Caldanaerobacter subterraneus subsp. tengcongensis (strain DSM 15242 / JCM 11007 / NBRC 100824 / MB4) (Thermoanaerobacter tengcongensis)).